We begin with the raw amino-acid sequence, 517 residues long: Ribose import ATP-binding protein RbsA (517 aa).

ABC transporter domains are found at residues 11–251 (LEMR…VGRD) and 263–507 (YDPG…ALAT). ATP is bound at residue 43 to 50 (GENGAGKS).

It belongs to the ABC transporter superfamily. Ribose importer (TC 3.A.1.2.1) family. As to quaternary structure, the complex is composed of an ATP-binding protein (RbsA), two transmembrane proteins (RbsC) and a solute-binding protein (RbsB).

Its subcellular location is the cell inner membrane. It catalyses the reaction D-ribose(out) + ATP + H2O = D-ribose(in) + ADP + phosphate + H(+). Part of the ABC transporter complex RbsABC involved in ribose import. Responsible for energy coupling to the transport system. The protein is Ribose import ATP-binding protein RbsA of Burkholderia pseudomallei (strain K96243).